The chain runs to 236 residues: Small ribosomal subunit protein uS2c (236 aa).

It belongs to the universal ribosomal protein uS2 family.

The protein localises to the plastid. Its subcellular location is the chloroplast. The protein is Small ribosomal subunit protein uS2c (rps2) of Acorus calamus var. americanus (American sweet flag).